The chain runs to 370 residues: Proline-rich protein 5-like (370 aa).

Ser28 carries the post-translational modification Phosphoserine. Disordered stretches follow at residues 312-346 (LGEE…LDSP) and 351-370 (LEDV…ASLS).

The protein belongs to the PROTOR family. As to quaternary structure, interacts with the mammalian target of rapamycin complex 2 (mTORC2) which contains MTOR, MLST8, PRR5, RICTOR, MAPKAP1 and DEPTOR. Interacts with RFFL. Interacts (via C-terminus) with ZFP36 (via C-terminus); this interaction may accelerate ZFP36-mediated mRNA decay during stress. Interacts with RICTOR. In terms of processing, ubiquitinated. Ubiquitination by RFFL promotes proteasomal degradation of PRR5L thereby modifying the substrate-specific activity of the mTORC2 complex. Ubiquitination by RFFL is stimulated by LPA/lysophosphatidic acid.

Functionally, associates with the mTORC2 complex that regulates cellular processes including survival and organization of the cytoskeleton. Regulates the activity of the mTORC2 complex in a substrate-specific manner preventing for instance the specific phosphorylation of PKCs and thereby controlling cell migration. Plays a role in the stimulation of ZFP36-mediated mRNA decay of several ZFP36-associated mRNAs, such as TNF-alpha and GM-CSF, in response to stress. Required for ZFP36 localization to cytoplasmic stress granule (SG) and P-body (PB) in response to stress. The chain is Proline-rich protein 5-like (Prr5l) from Mus musculus (Mouse).